The following is a 366-amino-acid chain: Phenylalanine dehydrogenase (366 aa).

Arginine 45 lines the NAD(+) pocket. Residue lysine 69 coordinates L-phenylalanine. Lysine 81 is an active-site residue. NAD(+)-binding positions include aspartate 116, threonine 151, 181 to 187, 204 to 205, 241 to 242, and 262 to 264; these read GVGKVGE, DI, AK, and SAN. Asparagine 264 serves as a coordination point for L-phenylalanine.

The protein belongs to the Glu/Leu/Phe/Val dehydrogenases family.

The enzyme catalyses L-phenylalanine + NAD(+) + H2O = 3-phenylpyruvate + NH4(+) + NADH + H(+). It participates in amino-acid biosynthesis; L-phenylalanine biosynthesis; L-phenylalanine from phenylpyruvate (PDH route): step 1/1. Its function is as follows. Catalyzes the reversible NAD(+)-dependent oxidative deamination of L-phenylalanine to phenylpyruvate. The sequence is that of Phenylalanine dehydrogenase from Thermoactinomyces intermedius.